Reading from the N-terminus, the 183-residue chain is Calmodulin-like protein 3 (183 aa).

4 EF-hand domains span residues 7 to 42 (EQIA…LGQS), 43 to 78 (PTEA…KLRD), 80 to 115 (GAED…LSDP), and 116 to 151 (LSDD…KRRQ). Ca(2+) is bound by residues Asp-20, Asp-22, Asp-24, Thr-26, Glu-31, Asp-56, Asp-58, Ser-60, Ser-62, Glu-67, Asp-93, Asp-95, Asn-97, Glu-104, Asp-129, Asp-131, Asp-133, Gln-135, and Glu-140. A disordered region spans residues 154–183 (MEGHGSGGHRSSNSHKKSGCCGPNSSCTIL). 2 S-palmitoyl cysteine lipidation sites follow: Cys-173 and Cys-174. Cys-180 is modified (cysteine methyl ester). Cys-180 is lipidated: S-farnesyl cysteine. Residues 181-183 (TIL) constitute a propeptide, removed in mature form.

Belongs to the calmodulin family.

It is found in the membrane. Its function is as follows. Potential calcium sensor. This Oryza sativa subsp. japonica (Rice) protein is Calmodulin-like protein 3 (CML3).